A 223-amino-acid chain; its full sequence is uncharacterized protein (223 aa).

The disordered stretch occupies residues G40–K70. The segment covering T51 to K70 has biased composition (basic and acidic residues).

This is an uncharacterized protein from Homo sapiens (Human).